Here is a 388-residue protein sequence, read N- to C-terminus: Purple acid phosphatase 19 (388 aa).

An N-terminal signal peptide occupies residues 1-24 (MGLNHLTLVCSAIALLSIFVVSQA). Residues N97 and N111 are each glycosylated (N-linked (GlcNAc...) asparagine). D145 and Y148 together coordinate Fe cation. Residue D145 participates in Zn(2+) binding. N182 provides a ligand contact to Zn(2+). Residue N182 participates in substrate binding. A glycan (N-linked (GlcNAc...) asparagine) is linked at N226. H238 is a binding site for Zn(2+). The Proton donor role is filled by H248. H275 contributes to the Zn(2+) binding site. 275 to 277 (HVH) serves as a coordination point for substrate. H277 provides a ligand contact to Fe cation. N-linked (GlcNAc...) asparagine glycans are attached at residues N291 and N348.

Belongs to the metallophosphoesterase superfamily. Purple acid phosphatase family. Homodimer. Fe cation serves as cofactor. Zn(2+) is required as a cofactor. As to expression, specifically expressed in flowers.

The protein resides in the secreted. It carries out the reaction a phosphate monoester + H2O = an alcohol + phosphate. The chain is Purple acid phosphatase 19 (PAP19) from Arabidopsis thaliana (Mouse-ear cress).